The following is a 293-amino-acid chain: 33 kDa chaperonin (293 aa).

Intrachain disulfides connect Cys236-Cys238 and Cys269-Cys272.

The protein belongs to the HSP33 family. Under oxidizing conditions two disulfide bonds are formed involving the reactive cysteines. Under reducing conditions zinc is bound to the reactive cysteines and the protein is inactive.

The protein resides in the cytoplasm. In terms of biological role, redox regulated molecular chaperone. Protects both thermally unfolding and oxidatively damaged proteins from irreversible aggregation. Plays an important role in the bacterial defense system toward oxidative stress. This is 33 kDa chaperonin from Lactobacillus delbrueckii subsp. bulgaricus (strain ATCC 11842 / DSM 20081 / BCRC 10696 / JCM 1002 / NBRC 13953 / NCIMB 11778 / NCTC 12712 / WDCM 00102 / Lb 14).